An 816-amino-acid polypeptide reads, in one-letter code: Bifunctional aspartokinase/homoserine dehydrogenase (816 aa).

The segment at 1–250 (MKLLKFGGTS…VPNARLLKSI (250 aa)) is aspartokinase. Residues 251–471 (SYQEAMELSY…FNKKTIHMFL (221 aa)) are interface. An ACT domain is found at 402–479 (IVGSNIYKKH…FLIGIGGIGS (78 aa)). The homoserine dehydrogenase stretch occupies residues 472–816 (IGIGGIGSTL…VFSDLLRTLS (345 aa)). 3 residues coordinate NAD(+): Gly-476, Ile-477, and Ala-505. Ile-477 serves as a coordination point for NADP(+). Ile-477 contacts NADPH. The NADP(+) site is built by Lys-508 and Thr-556. Residue Thr-556 participates in NAD(+) binding. NADPH contacts are provided by Thr-556, Ser-557, Ser-578, and Lys-580. Residues Ser-578 and Lys-580 each contribute to the NADP(+) site. Na(+)-binding residues include Glu-607, Val-610, Ala-612, and Leu-614. NADP(+) is bound by residues Gly-665 and Glu-668. Residues Glu-668 and Asp-679 each contribute to the L-homoserine site. Catalysis depends on Lys-683, which acts as the Proton donor. Gly-799 is a binding site for NAD(+). Gly-799 serves as a coordination point for NADP(+). NADPH is bound at residue Gly-799.

This sequence in the N-terminal section; belongs to the aspartokinase family. It in the C-terminal section; belongs to the homoserine dehydrogenase family. As to quaternary structure, homotetramer. The cofactor is a metal cation.

It carries out the reaction L-homoserine + NADP(+) = L-aspartate 4-semialdehyde + NADPH + H(+). It catalyses the reaction L-homoserine + NAD(+) = L-aspartate 4-semialdehyde + NADH + H(+). The enzyme catalyses L-aspartate + ATP = 4-phospho-L-aspartate + ADP. It functions in the pathway amino-acid biosynthesis; L-lysine biosynthesis via DAP pathway; (S)-tetrahydrodipicolinate from L-aspartate: step 1/4. The protein operates within amino-acid biosynthesis; L-methionine biosynthesis via de novo pathway; L-homoserine from L-aspartate: step 1/3. It participates in amino-acid biosynthesis; L-methionine biosynthesis via de novo pathway; L-homoserine from L-aspartate: step 3/3. Its pathway is amino-acid biosynthesis; L-threonine biosynthesis; L-threonine from L-aspartate: step 1/5. It functions in the pathway amino-acid biosynthesis; L-threonine biosynthesis; L-threonine from L-aspartate: step 3/5. Functionally, bifunctional aspartate kinase and homoserine dehydrogenase that catalyzes the first and the third steps toward the synthesis of lysine, methionine and threonine from aspartate. The polypeptide is Bifunctional aspartokinase/homoserine dehydrogenase (thrA) (Buchnera aphidicola subsp. Acyrthosiphon pisum (strain APS) (Acyrthosiphon pisum symbiotic bacterium)).